The chain runs to 169 residues: Photosystem I assembly protein Ycf3 (169 aa).

3 TPR repeats span residues 35 to 68, 72 to 105, and 120 to 153; these read AFSY…EIDP, SYIL…NPAL, and GEQA…APSN.

Belongs to the Ycf3 family.

Its subcellular location is the plastid. The protein localises to the chloroplast thylakoid membrane. Functionally, essential for the assembly of the photosystem I (PSI) complex. May act as a chaperone-like factor to guide the assembly of the PSI subunits. This chain is Photosystem I assembly protein Ycf3, found in Chaetosphaeridium globosum (Charophycean green alga).